The primary structure comprises 279 residues: ESX-1 secretion-associated protein EspG1 (279 aa).

It belongs to the EspG family. Interacts specifically with ESX-1-dependent PE/PPE proteins.

Its subcellular location is the cytoplasm. Its function is as follows. Specific chaperone for cognate PE/PPE proteins. Plays an important role in preventing aggregation of PE/PPE dimers. This chain is ESX-1 secretion-associated protein EspG1, found in Mycobacterium marinum (strain ATCC BAA-535 / M).